The following is a 517-amino-acid chain: MMDSSILQTLAVLYVLYLLGLIIYRLYFSPLAKFPGPKLAACSKWYEFYYDVILRGQFTFQIQRMHQKYGPIVRINPFELHIQDSTFWDELYTKNKEYERYAWMSGRFGANTTTSSTVKSDLHATRRAPLNPMFSKRSITEFEPIVHEKVGLLSKRLAEYAKNGEVLEMNSAFNAFAGDVISSYCFGFSFDQLKSSGFKDNFHAAYEAVRKFAHFGLQFPVVFIILGLSPRAMLKLVVPNIYKMFVLQKDLQSKISAIIQDHQGNPEDIDSKSSLNTHSHPTIFDELLRSKLPPSEKTVRRLGSEAQQMIGAGVETVAWALTTTVFYLLSDHACLDKLRAELKAAIPDPANLPSSTALEKLPYLSACVKEGIRLSTGVSVRLPRVSPHKPIVYGGWVIPPIVPVSMTTLDVLRDPEVFTSPNNFIPERWLGSPKVANTGESLAKYFVPFGKGPRMCIGINLAYVEMHLTLAMLFRRFTFELYETDVSDVEIKHDFMVPQPKLSTKGVRAKVTGLVVE.

A helical transmembrane segment spans residues Ser-4–Tyr-24. Asn-111 is a glycosylation site (N-linked (GlcNAc...) asparagine). Residues Phe-219–Pro-239 traverse the membrane as a helical segment. Cys-456 contributes to the heme binding site.

The protein belongs to the cytochrome P450 family. Heme is required as a cofactor.

The protein resides in the membrane. It participates in antibiotic biosynthesis. Functionally, cytochrome P450 monooxygenase; part of the gene cluster that mediates the biosynthesis of sordarin and hypoxysordarin, glycoside antibiotics with a unique tetracyclic diterpene aglycone structure. First, the geranylgeranyl diphosphate synthase sdnC constructs GGDP from farnesyl diphosphate and isopentenyl diphosphate. The diterpene cyclase sdnA then catalyzes the cyclization of GGDP to afford cycloaraneosene. Cycloaraneosene is then hydroxylated four times by the putative cytochrome P450 monooxygenases sdnB, sdnE, sdnF and sdnH to give a hydroxylated cycloaraneosene derivative such as cycloaraneosene-8,9,13,19-tetraol. Although the order of the hydroxylations is unclear, at least C8, C9 and C13 of the cycloaraneosene skeleton are hydroxylated before the sordaricin formation. Dehydration of the 13-hydroxy group of the hydroxylated cycloaraneosene derivative might be catalyzed by an unassigned hypothetical protein such as sdnG and sdnP to construct the cyclopentadiene moiety. The FAD-dependent oxidoreductase sdnN is proposed to catalyze the oxidation at C9 of the hydroxylated cycloaraneosene derivative and also catalyze the Baeyer-Villiger oxidation to give the lactone intermediate. The presumed lactone intermediate would be hydrolyzed to give an acrolein moiety and a carboxylate moiety. Then, [4+2]cycloaddition would occur between the acrolein moiety and the cyclopentadiene moiety to give sordaricin. SdnN might also be involved in the [4+2]cycloaddition after the hypothesized oxidation to accommodate the oxidized product and prompt the [4+2]cycloaddition. GDP-6-deoxy-D-altrose may be biosynthesized from GDP-D-mannose by the putative GDP-mannose-4,6-dehydratase sdnI and the short-chain dehydrogenase sdnK. The glycosyltransferase sdnJ catalyzes the attachment of 6-deoxy-D-altrose onto the 19-hydroxy group of sordaricin to give 4'-O-demethylsordarin. The methyltransferase sdnD would complete the biosynthesis of sordarin. Sordarin can be further modified into hypoxysordarin. The unique acyl chain at the 3'-hydroxy group of hypoxysordarin would be constructed by an iterative type I PKS sdnO and the trans-acting polyketide methyltransferase sdnL. SdnL would be responsible for the introduction of an alpha-methyl group of the polyketide chain. Alternatively, the beta-lactamase-like protein sdnR might be responsible for the cleavage and transfer of the polyketide chain from the PKS sdnO to sordarin. Two putative cytochrome P450 monooxygenases, sdnQ and sdnT, might catalyze the epoxidations of the polyketide chain to complete the biosynthesis of hypoxysordarin. Transcriptional regulators sdnM and sdnS are presumably encoded for the transcriptional regulation of the expression of the sdn gene cluster. This chain is Cytochrome P450 monooxygenase sdnE, found in Sordaria araneosa (Pleurage araneosa).